A 492-amino-acid chain; its full sequence is Transmembrane protein 104 homolog (492 aa).

Over 1–17 (MQSNTDSSTSGTYSQTV) the chain is Cytoplasmic. A helical membrane pass occupies residues 18–38 (GLLYVFNLIVGTGALALPKAF). The Extracellular segment spans residues 39-44 (QTAGWL). The helical transmembrane segment at 45 to 65 (LSITLLTFSAFMSYVAATFVI) threads the bilayer. Residues 66-113 (EALSVANAVLSKKRRVEYDDVVVADGPSTFEISKKVEVSEMASMFLSK) lie on the Cytoplasmic side of the membrane. Residues 114–134 (VSLVFSYFAIIIYLFGDLAIY) traverse the membrane as a helical segment. Residues 135–176 (STTVPKSAMNIVCATINASTVKSSDPCHESWPEILTRMTVYR) lie on the Extracellular side of the membrane. Asn-151 carries an N-linked (GlcNAc...) asparagine glycan. Residues 177 to 197 (FFVIIFVVVVCLPMVIAGITK) form a helical membrane-spanning segment. At 198–209 (TRHIQIMTTLSR) the chain is on the cytoplasmic side. Residues 210–230 (WAAFILMISLATMQLSSDGAA) form a helical membrane-spanning segment. Residues 231–237 (AHPPAYN) lie on the Extracellular side of the membrane. A helical transmembrane segment spans residues 238–258 (FHGFGSLFGCAVYAFMCHHSI). The Cytoplasmic portion of the chain corresponds to 259-274 (PSLITPMRTKDNVFGK). Residues 275–295 (IALVYGVVGVFYFTLSLTGAF) form a helical membrane-spanning segment. Topologically, residues 296–324 (AFEHVQDIYTLNFFHDGNTSFIYSIIDYF) are extracellular. The N-linked (GlcNAc...) asparagine glycan is linked to Asn-313. The chain crosses the membrane as a helical span at residues 325–345 (LALFPIITLTSSYPIIALTLI). Over 346–392 (NNFNVVKDILCPKVGQENESLLEADSLVEDNDTDDEREARNARNEKS) the chain is Cytoplasmic. Residues 393 to 413 (VFDVLVPALVLALPTFLSLLT) traverse the membrane as a helical segment. The Extracellular portion of the chain corresponds to 414 to 415 (DD). Residues 416–436 (MLLLASITGSFPGVAVQFAIP) form a helical membrane-spanning segment. Topologically, residues 437-466 (CLLVTAARKHARSVLNFPVPRKNNSPFQSP) are cytoplasmic. The chain crosses the membrane as a helical span at residues 467-487 (IWIVLISSWAGFSMIMVLLNL). The Extracellular segment spans residues 488–492 (VGVKF).

It belongs to the TMEM104 family.

The protein localises to the membrane. In Caenorhabditis elegans, this protein is Transmembrane protein 104 homolog.